We begin with the raw amino-acid sequence, 354 residues long: Nicotinate-nucleotide--dimethylbenzimidazole phosphoribosyltransferase (354 aa).

Glutamate 322 serves as the catalytic Proton acceptor.

Belongs to the CobT family.

It catalyses the reaction 5,6-dimethylbenzimidazole + nicotinate beta-D-ribonucleotide = alpha-ribazole 5'-phosphate + nicotinate + H(+). The protein operates within nucleoside biosynthesis; alpha-ribazole biosynthesis; alpha-ribazole from 5,6-dimethylbenzimidazole: step 1/2. Catalyzes the synthesis of alpha-ribazole-5'-phosphate from nicotinate mononucleotide (NAMN) and 5,6-dimethylbenzimidazole (DMB). The sequence is that of Nicotinate-nucleotide--dimethylbenzimidazole phosphoribosyltransferase from Solidesulfovibrio magneticus (strain ATCC 700980 / DSM 13731 / RS-1) (Desulfovibrio magneticus).